We begin with the raw amino-acid sequence, 314 residues long: Phospholipid phosphatase-related protein type 5 (314 aa).

A run of 6 helical transmembrane segments spans residues 5-25 (FSLTIMLYFQMVIMAGTVMLA), 61-81 (IPPVLLLSLVTGVPVLVIIVG), 120-140 (FLGIYTFGLFATDIFVNAGQV), 194-214 (AALSVYAALYLAMYITSTIKA), 223-243 (VLCLGLMCLAFLTGINRVAEY), and 250-270 (VIAGFLIGISIAVFLVVCVVN).

Belongs to the PA-phosphatase related phosphoesterase family.

The protein resides in the cell membrane. Induces filopodia formation and promotes neurite growth. The chain is Phospholipid phosphatase-related protein type 5 from Xenopus laevis (African clawed frog).